We begin with the raw amino-acid sequence, 646 residues long: Phosphomethylpyrimidine synthase (646 aa).

Residues 1–13 (MNIRSNPDTTRPA) are compositionally biased toward polar residues. The interval 1–30 (MNIRSNPDTTRPAVTTGALPSSRKMFSAPD) is disordered. Substrate contacts are provided by residues Asn-221, Met-250, Tyr-279, His-315, 335-337 (SRG), 376-379 (DGLR), and Glu-415. His-419 serves as a coordination point for Zn(2+). Tyr-442 is a binding site for substrate. His-483 contacts Zn(2+). The [4Fe-4S] cluster site is built by Cys-563, Cys-566, and Cys-571.

The protein belongs to the ThiC family. As to quaternary structure, homodimer. It depends on [4Fe-4S] cluster as a cofactor.

The enzyme catalyses 5-amino-1-(5-phospho-beta-D-ribosyl)imidazole + S-adenosyl-L-methionine = 4-amino-2-methyl-5-(phosphooxymethyl)pyrimidine + CO + 5'-deoxyadenosine + formate + L-methionine + 3 H(+). It functions in the pathway cofactor biosynthesis; thiamine diphosphate biosynthesis. Functionally, catalyzes the synthesis of the hydroxymethylpyrimidine phosphate (HMP-P) moiety of thiamine from aminoimidazole ribotide (AIR) in a radical S-adenosyl-L-methionine (SAM)-dependent reaction. This is Phosphomethylpyrimidine synthase from Nitrobacter winogradskyi (strain ATCC 25391 / DSM 10237 / CIP 104748 / NCIMB 11846 / Nb-255).